The chain runs to 97 residues: Large ribosomal subunit protein uL23 (97 aa).

The protein belongs to the universal ribosomal protein uL23 family. Part of the 50S ribosomal subunit. Contacts protein L29, and trigger factor when it is bound to the ribosome.

One of the early assembly proteins it binds 23S rRNA. One of the proteins that surrounds the polypeptide exit tunnel on the outside of the ribosome. Forms the main docking site for trigger factor binding to the ribosome. The sequence is that of Large ribosomal subunit protein uL23 from Rhizobium etli (strain CIAT 652).